The chain runs to 475 residues: Membrane-bound lytic murein transglycosylase F (475 aa).

An N-terminal signal peptide occupies residues 1 to 15 (MKKLLLILCCITLLA). A non-LT domain region spans residues 16–258 (ACQKVVVEQE…HLNEKYFAHV (243 aa)). Residues 259–475 (KRFDYVDTRA…KTEAAQPQQP (217 aa)) form an LT domain region. E303 is a catalytic residue.

It in the N-terminal section; belongs to the bacterial solute-binding protein 3 family. In the C-terminal section; belongs to the transglycosylase Slt family.

Its subcellular location is the cell outer membrane. The enzyme catalyses Exolytic cleavage of the (1-&gt;4)-beta-glycosidic linkage between N-acetylmuramic acid (MurNAc) and N-acetylglucosamine (GlcNAc) residues in peptidoglycan, from either the reducing or the non-reducing ends of the peptidoglycan chains, with concomitant formation of a 1,6-anhydrobond in the MurNAc residue.. Its function is as follows. Murein-degrading enzyme that degrades murein glycan strands and insoluble, high-molecular weight murein sacculi, with the concomitant formation of a 1,6-anhydromuramoyl product. Lytic transglycosylases (LTs) play an integral role in the metabolism of the peptidoglycan (PG) sacculus. Their lytic action creates space within the PG sacculus to allow for its expansion as well as for the insertion of various structures such as secretion systems and flagella. The protein is Membrane-bound lytic murein transglycosylase F of Shewanella halifaxensis (strain HAW-EB4).